The following is a 137-amino-acid chain: Large ribosomal subunit protein eL28 (137 aa).

Position 2 is an N-acetylserine (Ser2). Residues Lys58 and Lys65 each participate in a glycyl lysine isopeptide (Lys-Gly) (interchain with G-Cter in SUMO2) cross-link. A Phosphoserine modification is found at Ser115.

It belongs to the eukaryotic ribosomal protein eL28 family. As to quaternary structure, component of the large ribosomal subunit.

The protein localises to the cytoplasm. Component of the large ribosomal subunit. The ribosome is a large ribonucleoprotein complex responsible for the synthesis of proteins in the cell. This Mus musculus (Mouse) protein is Large ribosomal subunit protein eL28 (Rpl28).